Consider the following 287-residue polypeptide: Maleylpyruvate hydrolase (287 aa).

Residues Glu-143, Glu-145, and Asp-174 each contribute to the a divalent metal cation site.

It belongs to the FAH family. As to quaternary structure, homodimer.

The enzyme catalyses 3-maleylpyruvate + H2O = maleate + pyruvate + H(+). With respect to regulation, activated by Mn(2+). Inhibited by Ni(2+), Cd(2+), Co(2+) or Cu(2+). In terms of biological role, involved in the degradation of gentisate. Catalyzes the hydrolysis of 3-maleylpyruvate, the ring-cleavage product of gentisate. The protein is Maleylpyruvate hydrolase of Aquipseudomonas alcaligenes (Pseudomonas alcaligenes).